The primary structure comprises 114 residues: Replication initiation control protein YabA (114 aa).

Positions 79, 81, 95, and 98 each coordinate Zn(2+).

Belongs to the YabA family. In terms of assembly, homotetramer. Interacts with both DnaA and DnaN, acting as a bridge between these two proteins. Zn(2+) serves as cofactor.

The protein resides in the cytoplasm. It localises to the nucleoid. Its function is as follows. Involved in control of chromosome replication initiation. Inhibits the cooperative binding of DnaA to the oriC region, thus negatively regulating initiation of chromosome replication. Inhibits the ability of DnaA-ATP to form a helix on DNA; does not disassemble preformed DnaA-DNA helices. Decreases the residence time of DnaA on the chromosome at its binding sites (oriC, replication forks and promoter-binding sites). Tethers DnaA to the replication machinery via the DNA polymerase beta sliding clamp subunit (dnaN). Associates with oriC and other DnaA targets on the chromosome in a DnaA-dependent manner. The protein is Replication initiation control protein YabA of Lactobacillus gasseri (strain ATCC 33323 / DSM 20243 / BCRC 14619 / CIP 102991 / JCM 1131 / KCTC 3163 / NCIMB 11718 / NCTC 13722 / AM63).